The following is a 317-amino-acid chain: Transaldolase (317 aa).

The active-site Schiff-base intermediate with substrate is lysine 126.

This sequence belongs to the transaldolase family. Type 1 subfamily. In terms of assembly, homodimer.

Its subcellular location is the cytoplasm. The catalysed reaction is D-sedoheptulose 7-phosphate + D-glyceraldehyde 3-phosphate = D-erythrose 4-phosphate + beta-D-fructose 6-phosphate. It functions in the pathway carbohydrate degradation; pentose phosphate pathway; D-glyceraldehyde 3-phosphate and beta-D-fructose 6-phosphate from D-ribose 5-phosphate and D-xylulose 5-phosphate (non-oxidative stage): step 2/3. Functionally, transaldolase is important for the balance of metabolites in the pentose-phosphate pathway. The protein is Transaldolase of Burkholderia pseudomallei (strain K96243).